A 408-amino-acid polypeptide reads, in one-letter code: MGGMALTGNKAVVYKGKGTVAVEDIGYPELILRDGPGVPKANVNRKCEHGVILKVITTNICGSDQHMVRGRTTAPEGLVLGHEITGEVIETGRDVEFIKKGDIVSVPFNIACGRCVMCKTQKTHVCLNVNPDRPGSAYGYVDMGGWVGGQSEYVMVPYADFQLLVFPDKEQALEKILDLTMLSDIFPTGFHGAYTAGVQTGSTVYIAGAGPVGLAAAHSAQLLGASTVIVGDLNEDRLAQARSFGCETVNVQKHDRLGEQIEQILGEPTVDAAVDCVGFEASGHGNQGEAPAAVLNSIMDVTQVGGSLGIPGLYVTEDPGAKDADAKTGSLKIRFGLGWAKAHTFVTGQTPAMTYNRNLMKAILSGRAQIAKAVNATVISLDDAPKGYSDFDKGAAKKFVIDPHGTLK.

Cysteine 61 serves as a coordination point for Zn(2+). 3 residues coordinate NAD(+): glycine 62, serine 63, and histidine 66. Positions 82, 112, 115, 118, 126, and 184 each coordinate Zn(2+). NAD(+) is bound by residues valine 212, aspartate 232, arginine 237, valine 277, histidine 284, proline 311, leucine 313, glycine 348, and threonine 350.

The protein belongs to the zinc-containing alcohol dehydrogenase family. Requires Zn(2+) as cofactor.

The enzyme catalyses formaldehyde + NAD(+) + H2O = formate + NADH + 2 H(+). Activity is not inhibited by EDTA, which is probably not sufficient to displace the bound metal. Functionally, dehydrogenase that catalyzes the NAD(+)-dependent oxidation of formaldehyde. Exhibits lower activity with acetaldehyde (about 10-fold lower than for formaldehyde), but cannot use methanol, ethanol, 1-butanol, glyoxal or formic acid. Is involved in formaldehyde detoxification. This chain is Glutathione-independent formaldehyde dehydrogenase, found in Bacillus subtilis (strain 168).